The following is a 151-amino-acid chain: MWSKLSISSKINRIRDPESDNTIEDTHVARVMRKYYMDKIGTLPEWLRPPGWQPPVNTGPTSPVSINASNAAPSNLKASYIPANPRRLSSSTSSASSPPLRRLPSVQHSTFDDLFEGVGSLQKSPSTTKPLSSTPSGSLLRSKFDHTRKKF.

Residues 48-151 are disordered; the sequence is RPPGWQPPVN…SKFDHTRKKF (104 aa). A compositionally biased stretch (polar residues) spans 55-77; sequence PVNTGPTSPVSINASNAAPSNLK. Composition is skewed to low complexity over residues 85–105 and 123–141; these read PRRLSSSTSSASSPPLRRLPS and KSPSTTKPLSSTPSGSLLR.

This is an uncharacterized protein from Schizosaccharomyces pombe (strain 972 / ATCC 24843) (Fission yeast).